The sequence spans 557 residues: Glypican-1 (557 aa).

The first 23 residues, 1–23 (MELRTRGWWLLCAAAALVVCARG), serve as a signal peptide directing secretion. 7 cysteine pairs are disulfide-bonded: Cys32/Cys68, Cys62/Cys255, Cys69/Cys258, Cys190/Cys342, Cys245/Cys278, Cys267/Cys414, and Cys271/Cys400. 2 N-linked (GlcNAc...) asparagine glycosylation sites follow: Asn79 and Asn116. The interval 477 to 531 (FQDASDDGSGSGSGGGCPDDTCGRRVSKKSSSSRTPLTHALPGLSEQEGQKTSAA) is disordered. O-linked (Xyl...) (heparan sulfate) serine glycans are attached at residues Ser485, Ser487, and Ser489. Residue Ser529 is the site of GPI-anchor amidated serine attachment. A propeptide spans 530–557 (AATCPEPHSFFLLFLVTLVLAAARPRWR) (removed in mature form).

This sequence belongs to the glypican family. In terms of processing, S-nitrosylated in a Cu(2+)-dependent manner. Nitric acid (NO) is released from the nitrosylated cysteines by ascorbate or by some other reducing agent, in a Cu(2+) or Zn(2+) dependent manner. This free nitric oxide is then capable of cleaving the heparan sulfate side chains. N- and O-glycosylated. N-glycosylation is mainly of the complex type containing sialic acid. O-glycosylated with heparan sulfate. The heparan sulfate chains can be cleaved either by the action of heparanase or, degraded by a deaminative process that uses nitric oxide (NO) released from the S-nitrosylated cysteines. This process is triggered by ascorbate, or by some other reducing agent, in a Cu(2+)- or Zn(2+) dependent manner. Cu(2+) ions are provided by ceruloproteins such as APP, PRNP or CP which associate with GCP1 in intracellular compartments or lipid rafts. Post-translationally, this cell-associated glypican is further processed to give rise to a medium-released species.

Its subcellular location is the cell membrane. It localises to the endosome. The protein resides in the secreted. The protein localises to the extracellular space. Functionally, cell surface proteoglycan that bears heparan sulfate. Binds, via the heparan sulfate side chains, alpha-4 (V) collagen and participates in Schwann cell myelination. May act as a catalyst in increasing the rate of conversion of prion protein PRPN(C) to PRNP(Sc) via associating (via the heparan sulfate side chains) with both forms of PRPN, targeting them to lipid rafts and facilitating their interaction. Required for proper skeletal muscle differentiation by sequestering FGF2 in lipid rafts preventing its binding to receptors (FGFRs) and inhibiting the FGF-mediated signaling. Binds Cu(2+) or Zn(2+) ions. This is Glypican-1 (Gpc1) from Mus musculus (Mouse).